The chain runs to 130 residues: Small ribosomal subunit protein uS9 (130 aa).

The protein belongs to the universal ribosomal protein uS9 family.

In Colwellia psychrerythraea (strain 34H / ATCC BAA-681) (Vibrio psychroerythus), this protein is Small ribosomal subunit protein uS9.